Reading from the N-terminus, the 376-residue chain is Pyrimidine monooxygenase RutA (376 aa).

Residues 61–62 (IK), N127, E136, 152–153 (RY), and S202 each bind FMN.

Belongs to the NtaA/SnaA/DszA monooxygenase family. RutA subfamily.

It catalyses the reaction uracil + FMNH2 + NADH + O2 = (Z)-3-ureidoacrylate + FMN + NAD(+) + H2O + H(+). It carries out the reaction thymine + FMNH2 + NADH + O2 = (Z)-2-methylureidoacrylate + FMN + NAD(+) + H2O + H(+). Catalyzes the pyrimidine ring opening between N-3 and C-4 by an unusual flavin hydroperoxide-catalyzed mechanism, adding oxygen atoms in the process to yield ureidoacrylate peracid, that immediately reacts with FMN forming ureidoacrylate and FMN-N(5)-oxide. The FMN-N(5)-oxide reacts spontaneously with NADH to produce FMN. Requires the flavin reductase RutF to regenerate FMN in vivo. The chain is Pyrimidine monooxygenase RutA from Methylorubrum extorquens (strain CM4 / NCIMB 13688) (Methylobacterium extorquens).